A 262-amino-acid chain; its full sequence is Ankyrin repeat domain-containing protein 7 (262 aa).

ANK repeat units lie at residues 67-96 (KYRT…KINI), 100-129 (ENKS…DPNL), 133-162 (RYNT…DLEA), 166-195 (DGYT…DVNA), and 199-228 (YQRT…ELSC).

The sequence is that of Ankyrin repeat domain-containing protein 7 (ANKRD7) from Macaca fascicularis (Crab-eating macaque).